Reading from the N-terminus, the 524-residue chain is Probable 1,3-beta-glucanosyltransferase GAS3 (524 aa).

Residues 1–21 (MQLSKSILLAALAATPSLVNA) form the signal peptide. Cys78 and Cys107 are disulfide-bonded. (1,3-beta-D-glucosyl)n is bound by residues Tyr96, Asn168, and Glu169. Glu169 functions as the Proton donor in the catalytic mechanism. N-linked (GlcNAc...) asparagine glycosylation occurs at Asn201. (1,3-beta-D-glucosyl)n-binding residues include Asp212 and Arg217. Disulfide bonds link Cys226/Cys369 and Cys254/Cys286. Asn269 is a glycosylation site (N-linked (GlcNAc...) asparagine). The active-site Nucleophile is Glu283. Tyr315 serves as a coordination point for (1,3-beta-D-glucosyl)n. N-linked (GlcNAc...) asparagine glycosylation is found at Asn350, Asn385, Asn404, and Asn422. The segment at 461 to 498 (TSQSSSRSLTSSTSPSSSTGSSSSTGSSSASSSSKSKG) is disordered. Gly498 carries GPI-anchor amidated glycine lipidation. Positions 499 to 524 (VGNIVNVSFSQSGYLALFAGLISALL) are cleaved as a propeptide — removed in mature form.

This sequence belongs to the glycosyl hydrolase 72 family. In terms of processing, the GPI-anchor is attached to the protein in the endoplasmic reticulum and serves to target the protein to the cell surface. There, the glucosamine-inositol phospholipid moiety is cleaved off and the GPI-modified mannoprotein is covalently attached via its lipidless GPI glycan remnant to the 1,6-beta-glucan of the outer cell wall layer. N-glycosylated.

The protein localises to the secreted. It localises to the cell wall. Its subcellular location is the membrane. Splits internally a 1,3-beta-glucan molecule and transfers the newly generated reducing end (the donor) to the non-reducing end of another 1,3-beta-glucan molecule (the acceptor) forming a 1,3-beta linkage, resulting in the elongation of 1,3-beta-glucan chains in the cell wall. Involved in cell wall biosynthesis and morphogenesis. The polypeptide is Probable 1,3-beta-glucanosyltransferase GAS3 (GAS3) (Saccharomyces cerevisiae (strain ATCC 204508 / S288c) (Baker's yeast)).